Reading from the N-terminus, the 600-residue chain is MAIRQLSETLINQIAAGEVIERPASAAKELIENALDAGATRIEIATSGGGKALLRVSDNGSGMDAADLELAVRRHCTSKISETLEDIRTLGFRGEALPSIGSVARLSIASRRRDSAGGHEIAVAGGKIAHLRPAAANPGTIVEVRDLFFATPARLKFLKTEKAEAGAITEIVKRMAIAFPAVRFVLSGSDRTTLEFPATGDDHLGRMAQVLGKEFRDNAIALDAVREEIALTGFAGVPTFNRGNSAHQYAFVNGRPVQDKLILSAIRGAYAETIPSGRYPVAVLSITLDPALVDVNVHPAKSDVRFRDPGLVRGLIVGAIREALARDGSRAATTGASDMLRSFRPGFPPNSQRPQTAWSAETSSSRPYQPATGFGERPQASFDGLSMPTARAEPQFSPQPAAAEPNARYPLGAARAQIHANYIVAQTEDGLVIVDQHAAHERLVFEAMRKALHSKRLASQVLLIPEIVDIPEEDCDRLMQHAAELSELGLAIERFGPGAIAVRETPAMLGEVDAHGLIRQLADEIAEWDTASGLSAKLEYVAATMACHGSVRSGRRLRPEEMNALLREMEVTPGSGQCNHGRPTYIELKLSDIERLFGRS.

The disordered stretch occupies residues 327–405 (DGSRAATTGA…FSPQPAAAEP (79 aa)). Over residues 349-367 (PNSQRPQTAWSAETSSSRP) the composition is skewed to polar residues.

This sequence belongs to the DNA mismatch repair MutL/HexB family.

In terms of biological role, this protein is involved in the repair of mismatches in DNA. It is required for dam-dependent methyl-directed DNA mismatch repair. May act as a 'molecular matchmaker', a protein that promotes the formation of a stable complex between two or more DNA-binding proteins in an ATP-dependent manner without itself being part of a final effector complex. The chain is DNA mismatch repair protein MutL from Rhizobium johnstonii (strain DSM 114642 / LMG 32736 / 3841) (Rhizobium leguminosarum bv. viciae).